The following is a 211-amino-acid chain: Protein-L-isoaspartate O-methyltransferase (211 aa).

S62 is a catalytic residue.

The protein belongs to the methyltransferase superfamily. L-isoaspartyl/D-aspartyl protein methyltransferase family.

It is found in the cytoplasm. The enzyme catalyses [protein]-L-isoaspartate + S-adenosyl-L-methionine = [protein]-L-isoaspartate alpha-methyl ester + S-adenosyl-L-homocysteine. Its function is as follows. Catalyzes the methyl esterification of L-isoaspartyl residues in peptides and proteins that result from spontaneous decomposition of normal L-aspartyl and L-asparaginyl residues. It plays a role in the repair and/or degradation of damaged proteins. The protein is Protein-L-isoaspartate O-methyltransferase of Shewanella loihica (strain ATCC BAA-1088 / PV-4).